A 204-amino-acid polypeptide reads, in one-letter code: Dephospho-CoA kinase (204 aa).

A DPCK domain is found at 5–204; sequence VVGLTGGIGS…YLANLVKAML (200 aa). 13 to 18 lines the ATP pocket; that stretch reads GSGKSA.

It belongs to the CoaE family.

It is found in the cytoplasm. The enzyme catalyses 3'-dephospho-CoA + ATP = ADP + CoA + H(+). It participates in cofactor biosynthesis; coenzyme A biosynthesis; CoA from (R)-pantothenate: step 5/5. In terms of biological role, catalyzes the phosphorylation of the 3'-hydroxyl group of dephosphocoenzyme A to form coenzyme A. The protein is Dephospho-CoA kinase of Chromobacterium violaceum (strain ATCC 12472 / DSM 30191 / JCM 1249 / CCUG 213 / NBRC 12614 / NCIMB 9131 / NCTC 9757 / MK).